A 191-amino-acid chain; its full sequence is Putative 3-methyladenine DNA glycosylase (191 aa).

This sequence belongs to the DNA glycosylase MPG family.

In Carboxydothermus hydrogenoformans (strain ATCC BAA-161 / DSM 6008 / Z-2901), this protein is Putative 3-methyladenine DNA glycosylase.